We begin with the raw amino-acid sequence, 83 residues long: Small ribosomal subunit protein eS21 (83 aa).

The residue at position 1 (Met-1) is an N-acetylmethionine. Residue Lys-81 is modified to N6-acetyllysine.

The protein belongs to the eukaryotic ribosomal protein eS21 family. In terms of assembly, component of the 40S small ribosomal subunit.

The protein localises to the cytoplasm. Its subcellular location is the cytosol. It is found in the rough endoplasmic reticulum. In terms of biological role, component of the small ribosomal subunit. The ribosome is a large ribonucleoprotein complex responsible for the synthesis of proteins in the cell. This Mus musculus (Mouse) protein is Small ribosomal subunit protein eS21 (Rps21).